The sequence spans 158 residues: Transcriptional regulator MraZ (158 aa).

SpoVT-AbrB domains lie at 5 to 50 and 91 to 134; these read IYET…GGVY and AVEC…SQSE.

This sequence belongs to the MraZ family. As to quaternary structure, forms oligomers.

It is found in the cytoplasm. The protein resides in the nucleoid. The protein is Transcriptional regulator MraZ of Geobacter metallireducens (strain ATCC 53774 / DSM 7210 / GS-15).